An 88-amino-acid chain; its full sequence is Putative sulfur carrier protein AF_0552 (88 aa).

It belongs to the sulfur carrier protein CysO family.

The protein is Putative sulfur carrier protein AF_0552 of Archaeoglobus fulgidus (strain ATCC 49558 / DSM 4304 / JCM 9628 / NBRC 100126 / VC-16).